Here is a 483-residue protein sequence, read N- to C-terminus: Cobyric acid synthase (483 aa).

Residues 248 to 435 (LLKVVVPVLP…LHGLFETPAA (188 aa)) enclose the GATase cobBQ-type domain. Cys329 (nucleophile) is an active-site residue. The active site involves His427.

The protein belongs to the CobB/CobQ family. CobQ subfamily.

It participates in cofactor biosynthesis; adenosylcobalamin biosynthesis. In terms of biological role, catalyzes amidations at positions B, D, E, and G on adenosylcobyrinic A,C-diamide. NH(2) groups are provided by glutamine, and one molecule of ATP is hydrogenolyzed for each amidation. The protein is Cobyric acid synthase of Pseudomonas fluorescens (strain ATCC BAA-477 / NRRL B-23932 / Pf-5).